We begin with the raw amino-acid sequence, 185 residues long: Elongation factor P (185 aa).

Belongs to the elongation factor P family.

It localises to the cytoplasm. The protein operates within protein biosynthesis; polypeptide chain elongation. In terms of biological role, involved in peptide bond synthesis. Stimulates efficient translation and peptide-bond synthesis on native or reconstituted 70S ribosomes in vitro. Probably functions indirectly by altering the affinity of the ribosome for aminoacyl-tRNA, thus increasing their reactivity as acceptors for peptidyl transferase. In Moorella thermoacetica (strain ATCC 39073 / JCM 9320), this protein is Elongation factor P.